Reading from the N-terminus, the 385-residue chain is tRNA (guanine(26)-N(2))-dimethyltransferase (385 aa).

Residues 1-379 enclose the Trm1 methyltransferase domain; sequence MNITEGVVEL…ATIAEIRSAT (379 aa). S-adenosyl-L-methionine-binding residues include R37, R67, D82, D108, and A109. Residues C247, C250, C267, and C270 each coordinate Zn(2+).

This sequence belongs to the class I-like SAM-binding methyltransferase superfamily. Trm1 family.

The catalysed reaction is guanosine(26) in tRNA + 2 S-adenosyl-L-methionine = N(2)-dimethylguanosine(26) in tRNA + 2 S-adenosyl-L-homocysteine + 2 H(+). In terms of biological role, dimethylates a single guanine residue at position 26 of a number of tRNAs using S-adenosyl-L-methionine as donor of the methyl groups. The protein is tRNA (guanine(26)-N(2))-dimethyltransferase of Haloquadratum walsbyi (strain DSM 16790 / HBSQ001).